We begin with the raw amino-acid sequence, 320 residues long: tRNA U34 carboxymethyltransferase (320 aa).

Carboxy-S-adenosyl-L-methionine-binding positions include Lys89, Trp103, Lys108, Gly128, 150-152, 179-180, Met194, Tyr198, and Arg313; these read DPT and LE.

The protein belongs to the class I-like SAM-binding methyltransferase superfamily. CmoB family. Homotetramer.

It catalyses the reaction carboxy-S-adenosyl-L-methionine + 5-hydroxyuridine(34) in tRNA = 5-carboxymethoxyuridine(34) in tRNA + S-adenosyl-L-homocysteine + H(+). In terms of biological role, catalyzes carboxymethyl transfer from carboxy-S-adenosyl-L-methionine (Cx-SAM) to 5-hydroxyuridine (ho5U) to form 5-carboxymethoxyuridine (cmo5U) at position 34 in tRNAs. The chain is tRNA U34 carboxymethyltransferase from Haemophilus ducreyi (strain 35000HP / ATCC 700724).